We begin with the raw amino-acid sequence, 900 residues long: Endoglucanase H (900 aa).

The first 44 residues, 1–44, serve as a signal peptide directing secretion; it reads MKKRLLVSFLVLSIIVGLLSFQSLGNYNSGLKIGAWVGTQPSES. Positions 45–298 constitute a GH26 domain; it reads AIKSFQELQG…NSSPEALAAY (254 aa). E131 (proton donor) is an active-site residue. Catalysis depends on E244, which acts as the Nucleophile. The catalytic stretch occupies residues 300-630; it reads EAIGAGSSNP…DTEILNALFN (331 aa). The tract at residues 303–326 is disordered; the sequence is GAGSSNPTPTPTWTSTPPSSSPKA. Over residues 306 to 324 the composition is skewed to low complexity; sequence SSNPTPTPTWTSTPPSSSP. Residue E460 is the Proton donor of the active site. The Nucleophile role is filled by E565. One can recognise a CBM11 domain in the interval 655-900; that stretch reads AVGEKMLDDF…LLKAISEIPI (246 aa). The Dockerin domain maps to 827 to 900; sequence PSIKHGDLNF…LLKAISEIPI (74 aa).

It in the N-terminal section; belongs to the glycosyl hydrolase 5 (cellulase A) family. In the C-terminal section; belongs to the glycosyl hydrolase 26 family.

It carries out the reaction Endohydrolysis of (1-&gt;4)-beta-D-glucosidic linkages in cellulose, lichenin and cereal beta-D-glucans.. This enzyme catalyzes the endohydrolysis of 1,4-beta-glucosidic linkages in cellulose, lichenin and cereal beta-D-glucans. The protein is Endoglucanase H (celH) of Acetivibrio thermocellus (strain ATCC 27405 / DSM 1237 / JCM 9322 / NBRC 103400 / NCIMB 10682 / NRRL B-4536 / VPI 7372) (Clostridium thermocellum).